The primary structure comprises 141 residues: HTH-type transcriptional regulator LrpA (141 aa).

Positions 2 to 63 constitute an HTH asnC-type domain; it reads IDERDKIILE…RINPKKLGYS (62 aa). The segment at residues 21-40 is a DNA-binding region (H-T-H motif); that stretch reads FTEIAKKLGISETAVRKRVK.

Homooctamer; tetramer of dimers.

DNA-binding protein that negatively regulates its own transcription. Interferes with RNA polymerase (RNAP) recruitment by inhibiting the association of RNAP with the TBP-TFB promoter complex. This chain is HTH-type transcriptional regulator LrpA (lrpA), found in Pyrococcus horikoshii (strain ATCC 700860 / DSM 12428 / JCM 9974 / NBRC 100139 / OT-3).